Reading from the N-terminus, the 436-residue chain is NADH-quinone oxidoreductase subunit D 1 (436 aa).

Belongs to the complex I 49 kDa subunit family. As to quaternary structure, NDH-1 is composed of 14 different subunits. Subunits NuoB, C, D, E, F, and G constitute the peripheral sector of the complex.

Its subcellular location is the cell inner membrane. The catalysed reaction is a quinone + NADH + 5 H(+)(in) = a quinol + NAD(+) + 4 H(+)(out). NDH-1 shuttles electrons from NADH, via FMN and iron-sulfur (Fe-S) centers, to quinones in the respiratory chain. The immediate electron acceptor for the enzyme in this species is believed to be ubiquinone. Couples the redox reaction to proton translocation (for every two electrons transferred, four hydrogen ions are translocated across the cytoplasmic membrane), and thus conserves the redox energy in a proton gradient. This chain is NADH-quinone oxidoreductase subunit D 1, found in Stenotrophomonas maltophilia (strain R551-3).